A 156-amino-acid chain; its full sequence is Calcium-binding protein A (156 aa).

4 EF-hand domains span residues 4-39, 40-75, 80-115, and 118-153; these read AITK…TGSK, DPLR…VAAK, AINN…NNPD, and APLM…YKSL. Aspartate 17, asparagine 19, aspartate 21, asparagine 23, glutamate 28, aspartate 53, aspartate 55, aspartate 57, glutamate 64, aspartate 93, aspartate 95, aspartate 97, arginine 99, glutamate 104, aspartate 131, aspartate 133, aspartate 135, and glutamate 142 together coordinate Ca(2+).

This is Calcium-binding protein A (cbpA) from Dictyostelium discoideum (Social amoeba).